The primary structure comprises 211 residues: 3,4-dihydroxy-2-butanone 4-phosphate synthase (211 aa).

D-ribulose 5-phosphate contacts are provided by residues 37–38, Asp-42, 150–154, and Glu-174; these read RE and RGGHT. Glu-38 provides a ligand contact to Mg(2+). His-153 provides a ligand contact to Mg(2+).

This sequence belongs to the DHBP synthase family. As to quaternary structure, homodimer. The cofactor is Mg(2+). Requires Mn(2+) as cofactor.

It carries out the reaction D-ribulose 5-phosphate = (2S)-2-hydroxy-3-oxobutyl phosphate + formate + H(+). Its pathway is cofactor biosynthesis; riboflavin biosynthesis; 2-hydroxy-3-oxobutyl phosphate from D-ribulose 5-phosphate: step 1/1. Functionally, catalyzes the conversion of D-ribulose 5-phosphate to formate and 3,4-dihydroxy-2-butanone 4-phosphate. In Baumannia cicadellinicola subsp. Homalodisca coagulata, this protein is 3,4-dihydroxy-2-butanone 4-phosphate synthase.